We begin with the raw amino-acid sequence, 395 residues long: Bone morphogenetic protein 2 (395 aa).

A signal peptide spans 1 to 23 (MVAGTRCLLALLLPQVLLGGAAG). Residues 24–281 (LIPELGRRKF…GHPLHRREKR (258 aa)) constitute a propeptide, cleaved by PCSK5. S86 carries the phosphoserine modification. N-linked (GlcNAc...) asparagine glycosylation is found at N134 and N199. Residues 270–292 (GKGHPLHRREKRQAKHKQRKRLK) form a disordered region. The segment covering 273–292 (HPLHRREKRQAKHKQRKRLK) has biased composition (basic residues). Disulfide bonds link C295–C360, C324–C392, and C328–C394. N337 is a glycosylation site (N-linked (GlcNAc...) asparagine).

It belongs to the TGF-beta family. As to quaternary structure, homodimer; disulfide-linked. Interacts with SOSTDC1. Interacts with GREM2, RGMA, RGMB and RGMC. Interacts with ASPN. Interacts with MAFP5. Interacts with FBN1 (via N-terminal domain) and FBN2. Interacts with type I receptor BMPR1A. Interacts with type II receptor BMPR2. Interacts with SCUBE3. Interacts with TNFAIP6 (primarily via Link domain); this interaction is inhibited by hyaluronan. Interacts with ERFE. Interacts with BMPR1A/ALK3; the interaction may induce HAMP expression. Forms heterodimers with BMP6 in vitro; the heterodimer then binds to its receptor BMPR1A /ALK3 and may induce HAMP expression. Interacts with TGFBR3.

The protein localises to the secreted. Functionally, growth factor of the TGF-beta superfamily that plays essential roles in many developmental processes, including cardiogenesis, neurogenesis, and osteogenesis. Induces cartilage and bone formation. Initiates the canonical BMP signaling cascade by associating with type I receptor BMPR1A and type II receptor BMPR2. Once all three components are bound together in a complex at the cell surface, BMPR2 phosphorylates and activates BMPR1A. In turn, BMPR1A propagates signal by phosphorylating SMAD1/5/8 that travel to the nucleus and act as activators and repressors of transcription of target genes. Also acts to promote expression of HAMP, via the interaction with its receptor BMPR1A/ALK3. Can also signal through non-canonical pathways such as ERK/MAP kinase signaling cascade that regulates osteoblast differentiation. Also stimulates the differentiation of myoblasts into osteoblasts via the EIF2AK3-EIF2A-ATF4 pathway by stimulating EIF2A phosphorylation which leads to increased expression of ATF4 which plays a central role in osteoblast differentiation. Acts as a positive regulator of odontoblast differentiation during mesenchymal tooth germ formation, expression is repressed during the bell stage by MSX1-mediated inhibition of CTNNB1 signaling. This chain is Bone morphogenetic protein 2 (BMP2), found in Oryctolagus cuniculus (Rabbit).